The primary structure comprises 114 residues: uncharacterized protein (114 aa).

A run of 2 helical transmembrane segments spans residues Leu-9–Leu-29 and Leu-75–Ile-95.

It localises to the cell membrane. This is an uncharacterized protein from Mycoplasma pneumoniae (strain ATCC 29342 / M129 / Subtype 1) (Mycoplasmoides pneumoniae).